The sequence spans 88 residues: Putative membrane protein insertion efficiency factor (88 aa).

This sequence belongs to the UPF0161 family.

The protein resides in the cell inner membrane. In terms of biological role, could be involved in insertion of integral membrane proteins into the membrane. The polypeptide is Putative membrane protein insertion efficiency factor (Prochlorococcus marinus (strain MIT 9313)).